The primary structure comprises 719 residues: Homeobox protein SIX5 (719 aa).

Composition is skewed to low complexity over residues methionine 1–threonine 22 and glutamine 31–serine 65. 2 disordered regions span residues methionine 1 to valine 73 and tryptophan 241 to methionine 287. A DNA-binding region (homeobox) is located at residues glycine 194–threonine 253. The segment covering glutamate 272–arginine 282 has biased composition (basic and acidic residues).

This sequence belongs to the SIX/Sine oculis homeobox family. Probably binds DNA dimer. Interacts with EYA3, and probably EYA1 and EYA2.

Its subcellular location is the nucleus. Transcription factor that is thought to be involved in regulation of organogenesis. May be involved in determination and maintenance of retina formation. Binds a 5'-GGTGTCAG-3' motif present in the ARE regulatory element of ATP1A1. Binds a 5'-TCA[AG][AG]TTNC-3' motif present in the MEF3 element in the myogenin promoter, and in the IGFBP5 promoter. Thought to be regulated by association with Dach and Eya proteins, and seems to be coactivated by EYA1, EYA2 and EYA3. The polypeptide is Homeobox protein SIX5 (Six5) (Mus musculus (Mouse)).